A 484-amino-acid polypeptide reads, in one-letter code: Glutamate--tRNA ligase (484 aa).

A 'HIGH' region motif is present at residues 11–21; sequence PSPTGYLHIGN. The short motif at 252–256 is the 'KMSKS' region element; it reads KLSKR. Lys-255 lines the ATP pocket.

It belongs to the class-I aminoacyl-tRNA synthetase family. Glutamate--tRNA ligase type 1 subfamily. As to quaternary structure, monomer.

The protein resides in the cytoplasm. The catalysed reaction is tRNA(Glu) + L-glutamate + ATP = L-glutamyl-tRNA(Glu) + AMP + diphosphate. Functionally, catalyzes the attachment of glutamate to tRNA(Glu) in a two-step reaction: glutamate is first activated by ATP to form Glu-AMP and then transferred to the acceptor end of tRNA(Glu). The sequence is that of Glutamate--tRNA ligase from Staphylococcus aureus (strain Mu3 / ATCC 700698).